The sequence spans 826 residues: MEVLLRSISSFLNLSSSKHIDLDPFEKYYKRVEELLRVLKPIADVVVTSDFVFDEKLGKAFEELTQDVDQSIDLFRSWQAFSSKVYFVLQIESLLPKMRDTIVDTFQFLMSSKNHLPDELSPASLEQCLEKIKHLSYEEISSVIDGALRDQRDGVGPSPEILVKIGENTGLRSNQEILIEAVALERQKEMAEQSENNAEVEFLDQLIVIVNRMHERLLLIKQTQTSSVAILADFFCPLSLEVMTDPVIVSSGQTYEKAFIKRWIDLGLKVCPKTRQTLTHTTLIPNYTVKALIANWCETNDVKLPDPNKSTSLNELSPLLSCTDSIPSTGADVSARKVSNKSHDWDASSSETGKPSFSSRATEREGASPSRPASALGASSPGISGNGYGLDARRGSLNDFEDRSNDSRELRTDAPGRSSVSSTTRGSVENGQTSENHHHRSPSATSTVSNEEFPRADANENSEESAHATPYSSDASGEIRSGPLAATTSAATRRDLSDFSPKFMDRRTRGQFWRRPSERLGSRIVSAPSNETRRDLSEVETQVKKLVEELKSSSLDTQRQATAELRLLAKHNMDNRIVIGNSGAIVLLVELLYSTDSATQENAVTALLNLSINDNNKKAIADAGAIEPLIHVLENGSSEAKENSAATLFSLSVIEENKIKIGQSGAIGPLVDLLGNGTPRGKKDAATALFNLSIHQENKAMIVQSGAVRYLIDLMDPAAGMVDKAVAVLANLATIPEGRNAIGQEGGIPLLVEVVELGSARGKENAAAALLQLSTNSGRFCNMVLQEGAVPPLVALSQSGTPRAREKAQALLSYFRNQRHGNAGRG.

Residues Arg172 to Asp204 adopt a coiled-coil conformation. The 75-residue stretch at Ala229–Lys303 folds into the U-box domain. The tract at residues Gly330–Pro501 is disordered. Residues Ala347–Arg360 show a composition bias toward polar residues. Over residues Asp391–Ala414 the composition is skewed to basic and acidic residues. A Phosphoserine modification is found at Ser396. The span at Gly416 to Val428 shows a compositional bias: low complexity. A compositionally biased stretch (basic and acidic residues) spans Thr492–Pro501. 7 ARM repeats span residues Asn530 to Lys570, Met573 to Ile612, Asp614 to Val653, Glu655 to Ile694, Gln696 to Thr734, Pro736 to Thr775, and Gly778 to Asn817.

The enzyme catalyses S-ubiquitinyl-[E2 ubiquitin-conjugating enzyme]-L-cysteine + [acceptor protein]-L-lysine = [E2 ubiquitin-conjugating enzyme]-L-cysteine + N(6)-ubiquitinyl-[acceptor protein]-L-lysine.. Its pathway is protein modification; protein ubiquitination. Functionally, functions as an E3 ubiquitin ligase. The chain is U-box domain-containing protein 4 (PUB4) from Arabidopsis thaliana (Mouse-ear cress).